The sequence spans 209 residues: Uracil phosphoribosyltransferase (209 aa).

Residues R79, R104, and 131-139 (DPMLATGGS) each bind 5-phospho-alpha-D-ribose 1-diphosphate. Uracil contacts are provided by residues I194 and 199–201 (GDA). D200 contacts 5-phospho-alpha-D-ribose 1-diphosphate.

Belongs to the UPRTase family. Mg(2+) serves as cofactor.

The enzyme catalyses UMP + diphosphate = 5-phospho-alpha-D-ribose 1-diphosphate + uracil. The protein operates within pyrimidine metabolism; UMP biosynthesis via salvage pathway; UMP from uracil: step 1/1. Allosterically activated by GTP. Its function is as follows. Catalyzes the conversion of uracil and 5-phospho-alpha-D-ribose 1-diphosphate (PRPP) to UMP and diphosphate. This Geobacillus sp. (strain WCH70) protein is Uracil phosphoribosyltransferase.